A 350-amino-acid polypeptide reads, in one-letter code: MCQQILRDCILLIHHLCINRKKVSLVMLGPAYNHTMETPASFLLVGIPGLQSSHLWLAISLSAMYIIALLGNTIIVTAIWMDSTRHEPMYCFLCVLAAVDIVMASSVVPKMVSIFCSGDSSISFSACFTQMFFVHLATAVETGLLLTMAFDRYVAICKPLHYKRILTPQVMLGMSMAITIRAIIAITPLSWMVSHLPFCGSNVVVHSYCEHIALARLACADPVPSSLYSLIGSSLMVGSDVAFIAASYILILKAVFGLSSKTAQLKALSTCGSHVGVMALYYLPGMASIYAAWLGQDVVPLHTQVLLADLYVIIPATLNPIIYGMRTKQLRERIWSYLMHVLFDHSNLGS.

Residues 1 to 55 (MCQQILRDCILLIHHLCINRKKVSLVMLGPAYNHTMETPASFLLVGIPGLQSSHL) are Extracellular-facing. A glycan (N-linked (GlcNAc...) asparagine) is linked at asparagine 33. The helical transmembrane segment at 56–76 (WLAISLSAMYIIALLGNTIIV) threads the bilayer. At 77 to 84 (TAIWMDST) the chain is on the cytoplasmic side. Residues 85–105 (RHEPMYCFLCVLAAVDIVMAS) form a helical membrane-spanning segment. Residues 106 to 129 (SVVPKMVSIFCSGDSSISFSACFT) lie on the Extracellular side of the membrane. The cysteines at positions 127 and 219 are disulfide-linked. A helical membrane pass occupies residues 130-150 (QMFFVHLATAVETGLLLTMAF). Over 151–169 (DRYVAICKPLHYKRILTPQ) the chain is Cytoplasmic. Residues 170–190 (VMLGMSMAITIRAIIAITPLS) traverse the membrane as a helical segment. At 191–226 (WMVSHLPFCGSNVVVHSYCEHIALARLACADPVPSS) the chain is on the extracellular side. A helical transmembrane segment spans residues 227–247 (LYSLIGSSLMVGSDVAFIAAS). At 248–267 (YILILKAVFGLSSKTAQLKA) the chain is on the cytoplasmic side. Residues 268–288 (LSTCGSHVGVMALYYLPGMAS) form a helical membrane-spanning segment. The Extracellular portion of the chain corresponds to 289–304 (IYAAWLGQDVVPLHTQ). A helical transmembrane segment spans residues 305-325 (VLLADLYVIIPATLNPIIYGM). Residues 326–350 (RTKQLRERIWSYLMHVLFDHSNLGS) are Cytoplasmic-facing.

The protein belongs to the G-protein coupled receptor 1 family.

It localises to the cell membrane. In terms of biological role, odorant receptor. The chain is Olfactory receptor 52I2 (OR52I2) from Homo sapiens (Human).